Reading from the N-terminus, the 340-residue chain is DnaJ homolog subfamily B member 1 (340 aa).

The region spanning 2 to 70 (GKDYYQTLGL…REIFDRYGEE (69 aa)) is the J domain. Position 307 is a phosphothreonine (threonine 307).

Interacts with DNAJC3. Interacts with HSF1 (via transactivation domain); this interaction results in the inhibition of heat shock- and HSF1-induced transcriptional activity during the attenuation and recovery phase period of the heat shock response. Interacts with BAG3.

It is found in the cytoplasm. Its subcellular location is the nucleus. The protein localises to the nucleolus. Its function is as follows. Interacts with HSP70 and can stimulate its ATPase activity. Stimulates the association between HSC70 and HIP. Negatively regulates heat shock-induced HSF1 transcriptional activity during the attenuation and recovery phase period of the heat shock response. Stimulates ATP hydrolysis and the folding of unfolded proteins mediated by HSPA1A/B (in vitro). The sequence is that of DnaJ homolog subfamily B member 1 (DNAJB1) from Homo sapiens (Human).